A 135-amino-acid chain; its full sequence is Large ribosomal subunit protein bL21 (135 aa).

Positions 109–128 (TLATAQSAPPSTSEATTDTT) are enriched in polar residues. The interval 109-135 (TLATAQSAPPSTSEATTDTTGIPAAEE) is disordered.

It belongs to the bacterial ribosomal protein bL21 family. In terms of assembly, part of the 50S ribosomal subunit. Contacts protein L20.

Its function is as follows. This protein binds to 23S rRNA in the presence of protein L20. The chain is Large ribosomal subunit protein bL21 from Synechococcus sp. (strain JA-3-3Ab) (Cyanobacteria bacterium Yellowstone A-Prime).